The chain runs to 141 residues: Large ribosomal subunit protein bL17 (141 aa).

The protein belongs to the bacterial ribosomal protein bL17 family. In terms of assembly, part of the 50S ribosomal subunit. Contacts protein L32.

This is Large ribosomal subunit protein bL17 from Allorhizobium ampelinum (strain ATCC BAA-846 / DSM 112012 / S4) (Agrobacterium vitis (strain S4)).